Consider the following 1034-residue polypeptide: AP-3 complex subunit delta (1034 aa).

10 HEAT repeats span residues 35–72 (KYISTCIEEIKQELRQDNISVKCNAVAKLTYIQMLGYD), 143–180 (DLSRDLANDIMTLMSSTKPYLRMKAVLMMYKVFLRYPE), 181–217 (ALRPAFPKLKEKLEDPDPGVQSAAVNVICELARKNPK), 219–255 (YLPLAPIFFKLMTTSTNNWMLIKIIKLFGALTPLEPR), 258–297 (KKLIEPLTNLIHSTSAMSLLYECINTVIAVLISISSGMPN), 299–337 (SASIQLCVQKLRILIEDSDQNLKYLGLLAMSKILKTHPK), 338–374 (SVQAHKDLILACLDDKDESIRLRALDLLYGMVSKKNL), 376–414 (EIVKRLLGHMERAEGSAYRDELLYKVIEICAQSSYLYVT), 415–452 (NFEWYLTVLVELIQLEAGSRHGRLIAEQLLDVAIRVPV), and 570–609 (NSACMLIEMLRNQLSTSTDAMAMDTTTEGGIPPLAIEIVQ). Disordered regions lie at residues 637–660 (DLDEWINAPPPEDAASSSSSEHDK), 669–688 (QAGTGADGGEKRRQSLELTP), 701–723 (EQSNNPHYLKSTPTASGASNADQ), and 758–1034 (QEQQ…KEIL). Phosphoserine is present on S683. T687 is modified (phosphothreonine). A compositionally biased stretch (basic residues) spans 769–784 (GKKKHKKGKKSKKAKN). Composition is skewed to basic and acidic residues over residues 822-836 (KDGKYDPNDPHRALD) and 882-906 (KDKDKDKERKVKREHRESKRERKEA). The segment covering 928-942 (SATSNNNNTSTVLPD) has biased composition (low complexity). The segment covering 986–1003 (KVHKKKHKKEKSQRKEKK) has biased composition (basic residues). The span at 1007–1016 (ESASVSAIVS) shows a compositional bias: low complexity. The segment covering 1025-1034 (GISTPSKEIL) has biased composition (polar residues).

It belongs to the adaptor complexes large subunit family. In terms of assembly, adaptor protein complex 3 (AP-3) is a heterotetramer composed of two large chains (delta and beta3), a medium chain (mu3) and a small chain (sigma3).

It localises to the cytoplasmic vesicle. The protein resides in the clathrin-coated vesicle membrane. The protein localises to the golgi apparatus. Functionally, part of the AP-3 complex, an adapter-related complex which is not clathrin-associated. The complex is associated with the Golgi region as well as more peripheral structures. It facilitates the budding of vesicles from the Golgi membrane and may be directly involved in trafficking to lysosomes. In terms of biological role, may be a coat protein involved in the formation of specialized structures like pigment granules. The chain is AP-3 complex subunit delta (g) from Drosophila melanogaster (Fruit fly).